The following is a 388-amino-acid chain: 1-deoxy-D-xylulose 5-phosphate reductoisomerase (388 aa).

Threonine 15, glycine 16, serine 17, isoleucine 18, and asparagine 127 together coordinate NADPH. Residue lysine 128 coordinates 1-deoxy-D-xylulose 5-phosphate. Position 129 (glutamate 129) interacts with NADPH. Aspartate 153 serves as a coordination point for Mn(2+). 1-deoxy-D-xylulose 5-phosphate is bound by residues serine 154, glutamate 155, serine 179, and histidine 202. Glutamate 155 is a Mn(2+) binding site. Residue glycine 208 coordinates NADPH. 1-deoxy-D-xylulose 5-phosphate contacts are provided by serine 215, asparagine 220, lysine 221, and glutamate 224. Glutamate 224 provides a ligand contact to Mn(2+).

It belongs to the DXR family. Mg(2+) serves as cofactor. The cofactor is Mn(2+).

The enzyme catalyses 2-C-methyl-D-erythritol 4-phosphate + NADP(+) = 1-deoxy-D-xylulose 5-phosphate + NADPH + H(+). It participates in isoprenoid biosynthesis; isopentenyl diphosphate biosynthesis via DXP pathway; isopentenyl diphosphate from 1-deoxy-D-xylulose 5-phosphate: step 1/6. Catalyzes the NADPH-dependent rearrangement and reduction of 1-deoxy-D-xylulose-5-phosphate (DXP) to 2-C-methyl-D-erythritol 4-phosphate (MEP). The protein is 1-deoxy-D-xylulose 5-phosphate reductoisomerase of Bacteroides fragilis (strain YCH46).